The following is a 201-amino-acid chain: MELVLKDAQSALQVSETTFGREFNEALVHQVVVAYAAGARQGTRAQKTRSEVSGGGKKPWRQKGTGRARAGTIRSPIWRGGGVTFAAKPQDHSQKVNRKMYRGAIQSILSELVRQDRLVVVEKFGVDAPKTKELLTKLQALDLKDVLIVTPEVEENLFLAARNLYKVDVRDVTGIDPVSLIAFDKVLMTADAVKQIEEMLA.

Residues 43 to 66 (TRAQKTRSEVSGGGKKPWRQKGTG) form a disordered region.

It belongs to the universal ribosomal protein uL4 family. As to quaternary structure, part of the 50S ribosomal subunit.

Its function is as follows. One of the primary rRNA binding proteins, this protein initially binds near the 5'-end of the 23S rRNA. It is important during the early stages of 50S assembly. It makes multiple contacts with different domains of the 23S rRNA in the assembled 50S subunit and ribosome. In terms of biological role, forms part of the polypeptide exit tunnel. The protein is Large ribosomal subunit protein uL4 of Tolumonas auensis (strain DSM 9187 / NBRC 110442 / TA 4).